The chain runs to 377 residues: UPF0754 membrane protein LMOf2365_2257 (377 aa).

2 helical membrane passes run 1–21 and 357–377; these read MSVL…GAMT and YLGG…AMWI.

It belongs to the UPF0754 family.

Its subcellular location is the cell membrane. This chain is UPF0754 membrane protein LMOf2365_2257, found in Listeria monocytogenes serotype 4b (strain F2365).